Reading from the N-terminus, the 281-residue chain is Pantothenate synthetase (281 aa).

Position 30–37 (30–37 (MGNLHQGH)) interacts with ATP. Catalysis depends on histidine 37, which acts as the Proton donor. Glutamine 61 lines the (R)-pantoate pocket. Beta-alanine is bound at residue glutamine 61. An ATP-binding site is contributed by 149–152 (GRKD). Residue glutamine 155 coordinates (R)-pantoate. ATP-binding positions include isoleucine 178 and 186–189 (MSSR).

This sequence belongs to the pantothenate synthetase family. As to quaternary structure, homodimer.

Its subcellular location is the cytoplasm. It catalyses the reaction (R)-pantoate + beta-alanine + ATP = (R)-pantothenate + AMP + diphosphate + H(+). It functions in the pathway cofactor biosynthesis; (R)-pantothenate biosynthesis; (R)-pantothenate from (R)-pantoate and beta-alanine: step 1/1. Its function is as follows. Catalyzes the condensation of pantoate with beta-alanine in an ATP-dependent reaction via a pantoyl-adenylate intermediate. This is Pantothenate synthetase from Shewanella denitrificans (strain OS217 / ATCC BAA-1090 / DSM 15013).